Here is a 149-residue protein sequence, read N- to C-terminus: Flagellar assembly factor FliW (149 aa).

It belongs to the FliW family. Interacts with translational regulator CsrA and flagellin(s).

The protein resides in the cytoplasm. In terms of biological role, acts as an anti-CsrA protein, binds CsrA and prevents it from repressing translation of its target genes, one of which is flagellin. Binds to flagellin and participates in the assembly of the flagellum. The sequence is that of Flagellar assembly factor FliW from Thermotoga neapolitana (strain ATCC 49049 / DSM 4359 / NBRC 107923 / NS-E).